The primary structure comprises 780 residues: Gelsolin (780 aa).

Position 1 is an N-acetylmethionine; alternate (methionine 1). The first 25 residues, methionine 1 to alanine 25, serve as a signal peptide directing secretion. The interval valine 51 to phenylalanine 174 is actin-severing. A Gelsolin-like 1 repeat occupies phenylalanine 74–phenylalanine 155. Tyrosine 84 carries the post-translational modification Phosphotyrosine. Glycine 90, aspartate 91, glutamate 122, aspartate 134, glycine 139, and alanine 141 together coordinate Ca(2+). Positions aspartate 121–glycine 124 are actin-actin interfilament contact point. An a 1,2-diacyl-sn-glycero-3-phospho-(1D-myo-inositol-4,5-bisphosphate)-binding site is contributed by lysine 160–lysine 167. Residue valine 170 coordinates Ca(2+). Arginine 186–arginine 194 serves as a coordination point for a 1,2-diacyl-sn-glycero-3-phospho-(1D-myo-inositol-4,5-bisphosphate). A Gelsolin-like 2 repeat occupies valine 196–methionine 268. 2 residues coordinate Ca(2+): glycine 211 and aspartate 212. Cysteine 213 and cysteine 226 are disulfide-bonded. Residue glutamate 234 coordinates Ca(2+). The interval glycine 244–leucine 269 is disordered. Positions 284, 327, 328, and 352 each coordinate Ca(2+). The Gelsolin-like 3 repeat unit spans residues aspartate 315–phenylalanine 387. Tyrosine 407 and tyrosine 463 each carry phosphotyrosine. Residues alanine 432–alanine 780 form an actin-binding, Ca-sensitive region. The Gelsolin-like 4 repeat unit spans residues serine 453 to methionine 534. 7 residues coordinate Ca(2+): glycine 469, aspartate 470, glutamate 500, aspartate 512, glycine 517, proline 519, and threonine 549. Residues arginine 575–tryptophan 640 form a Gelsolin-like 5 repeat. N6-acetyllysine is present on lysine 582. 2 residues coordinate Ca(2+): asparagine 589 and aspartate 590. Tyrosine 601 carries the phosphotyrosine modification. Glutamate 612 provides a ligand contact to Ca(2+). Position 649 is a phosphotyrosine (tyrosine 649). The stretch at isoleucine 679–phenylalanine 754 is one Gelsolin-like 6 repeat. Ca(2+) is bound by residues aspartate 694, aspartate 695, and glutamate 717. A Phosphothreonine modification is found at threonine 740.

The protein belongs to the villin/gelsolin family. As to quaternary structure, binds to actin and to fibronectin. Identified in a complex composed of ACTA1, COBL, GSN and TMSB4X. Interacts with the inactive form of EIF2AK2/PKR. Interacts with FLII. In terms of processing, phosphorylated on tyrosine residues in vitro.

The protein resides in the cytoplasm. The protein localises to the cytoskeleton. It localises to the secreted. Its function is as follows. Calcium-regulated, actin-modulating protein that binds to the plus (or barbed) ends of actin monomers or filaments, preventing monomer exchange (end-blocking or capping). It can promote the assembly of monomers into filaments (nucleation) as well as sever filaments already formed. Plays a role in ciliogenesis. The protein is Gelsolin (Gsn) of Mus musculus (Mouse).